We begin with the raw amino-acid sequence, 386 residues long: Demethylsterigmatocystin 6-O-methyltransferase (386 aa).

Residue 137–150 (FDISGPCTQILPDF) participates in substrate binding. A substrate binding region spans residues 177 to 197 (MFEWMPQHPKHMESLGHLMAL). Residues 228–229 (GG), Asp253, 273–274 (NF), and Arg289 contribute to the S-adenosyl-L-methionine site. The active-site Proton acceptor is the His293.

This sequence belongs to the class I-like SAM-binding methyltransferase superfamily. Cation-independent O-methyltransferase family. COMT subfamily.

The enzyme catalyses 6-demethylsterigmatocystin + S-adenosyl-L-methionine = sterigmatocystin + S-adenosyl-L-homocysteine + H(+). It participates in mycotoxin biosynthesis; aflatoxin biosynthesis. In terms of biological role, catalyzes both the conversion of demethylsterigmatocystin (DMST) to sterigmatocystin and the conversion of dihydrodemethylsterigmatocystin to dihydrosterigmatocystin (DHDMST) during aflatoxin biosynthesis. In Aspergillus flavus (strain ATCC 200026 / FGSC A1120 / IAM 13836 / NRRL 3357 / JCM 12722 / SRRC 167), this protein is Demethylsterigmatocystin 6-O-methyltransferase (omtB).